The following is a 197-amino-acid chain: MASLALRGSSENPAPTKDTTTNPRGIPYAPFVDRVEDYVTSTTDVESTLKSFSEMISKYQFMESNTQRRSAGLKDKIPEIQKTLAMVRFLAGREEDDEPLETHFELNDTLYAKALVPTTKEVYLWLGANVMLAYPVDEAEELLVGKLGAAKTSLENCDEDLDFLREQITTLEVATARVYNWDVGQRRKEREGKGGKS.

The disordered stretch occupies residues 1–26 (MASLALRGSSENPAPTKDTTTNPRGI). Residues 9–23 (SSENPAPTKDTTTNP) show a composition bias toward polar residues.

It belongs to the prefoldin subunit alpha family. Heterohexamer of two PFD-alpha type and four PFD-beta type subunits.

In terms of biological role, prefoldin subunit; part of the gene cluster that mediates the biosynthesis of elsinochromes, pigments consisting of at least four interconvertible tautomers (A, B, C and D) that have a core phenolic quinone to which various side chains are attached and which play an important role in fungal pathogenesis. The non-reducing polyketide synthase PKS1 was proposed to iteratively catalyze decarboxylation between acetyl-CoA and malonyl-CoA subunits for polyketide chain elongation. The released polyketide undergoes cyclization to form an aromatic ring, and proceeds via serial modification steps to produce the heptaketide back- bone of elsinochrome. As elsinochrome has a symmetrical structure, two identical heptaketides are fused to form a core 1,2-dihydrobenzo-perylene ring structure, which can then be successively modified to produce the various derivatives of elsinochrome. Some of these reactions may be cooperatively carried out, at least in part, by the products of RDT1, OXR1 and PKS1. PRF1, embedded within the elsinochrome cluster possibly functions to stabilize some of the biosynthetic enzymes required for elsinochrome production. As prefoldin is a hexamer containing 2 a and 4 b subunits, additional prefoldin subunits, whose coding genes may not immediately link to the elsinochrome biosynthetic gene cluster, are required to fulfill the chaperone function. In addition, no methyltransferase-coding gene exists within the biosynthetic gene cluster, even though elsinochrome has four methyl groups at positions C3, C7, C8 and C12. Apparently, the identified gene cluster does not contain the entire entourage of genes responsible for elsinochrome biosynthesis. Once elsinochrome is synthesized, it must be exported outside the fungal cells, which is probably accomplished by the ECT1 transporter, to avoid toxicity. The sequence is that of Prefoldin subunit 3 from Elsinoe fawcettii (Citrus scab fungus).